A 490-amino-acid chain; its full sequence is tRNA-guanine(15) transglycosylase (490 aa).

Asp92 functions as the Nucleophile in the catalytic mechanism. Asp127 and Ala195 together coordinate substrate. Zn(2+) is bound by residues Cys278, Cys280, and Cys283.

It belongs to the archaeosine tRNA-ribosyltransferase family. Zn(2+) serves as cofactor.

It catalyses the reaction guanosine(15) in tRNA + 7-cyano-7-deazaguanine = 7-cyano-7-carbaguanosine(15) in tRNA + guanine. The protein operates within tRNA modification; archaeosine-tRNA biosynthesis. Functionally, exchanges the guanine residue with 7-cyano-7-deazaguanine (preQ0) at position 15 in the dihydrouridine loop (D-loop) of archaeal tRNAs. The protein is tRNA-guanine(15) transglycosylase of Haloarcula marismortui (strain ATCC 43049 / DSM 3752 / JCM 8966 / VKM B-1809) (Halobacterium marismortui).